Here is a 267-residue protein sequence, read N- to C-terminus: 2-keto-3-deoxy-L-rhamnonate aldolase (267 aa).

The active-site Proton acceptor is the His49. Residue Gln151 participates in substrate binding. Residue Glu153 participates in Mg(2+) binding. Substrate contacts are provided by Ala178 and Asp179. Asp179 provides a ligand contact to Mg(2+).

The protein belongs to the HpcH/HpaI aldolase family. KDR aldolase subfamily. In terms of assembly, homohexamer. Requires Mg(2+) as cofactor.

The enzyme catalyses 2-dehydro-3-deoxy-L-rhamnonate = (S)-lactaldehyde + pyruvate. Catalyzes the reversible retro-aldol cleavage of 2-keto-3-deoxy-L-rhamnonate (KDR) to pyruvate and lactaldehyde. The chain is 2-keto-3-deoxy-L-rhamnonate aldolase from Shigella sonnei (strain Ss046).